The chain runs to 227 residues: Large ribosomal subunit protein uL3 (227 aa).

Residues glycine 129–lysine 154 form a disordered region.

The protein belongs to the universal ribosomal protein uL3 family. Part of the 50S ribosomal subunit. Forms a cluster with proteins L14 and L19.

One of the primary rRNA binding proteins, it binds directly near the 3'-end of the 23S rRNA, where it nucleates assembly of the 50S subunit. The sequence is that of Large ribosomal subunit protein uL3 from Endomicrobium trichonymphae.